The following is a 258-amino-acid chain: Synapse differentiation-inducing gene protein 1 (258 aa).

At 1-181 (MDGIVEQKSV…NFLMMPPRDH (181 aa)) the chain is on the cytoplasmic side. Ser137 carries the phosphoserine modification. Residues 182-202 (LGLSVFSMLCCFWPLGIAAFY) traverse the membrane as a helical segment. The Extracellular segment spans residues 203 to 228 (LSHETNKAVAKGDFHQASTSSRRALF). The helical intramembrane region spans 229–249 (LAVLSITIGTGIYVGVAVALI). Over 250–258 (AYLSKNNHL) the chain is Extracellular.

Belongs to the CD225/Dispanin family. As to quaternary structure, homodimer. Interacts with GRIA1 and GRIA2. As to expression, enriched in the cerebellum and also expressed in the neocortex and modestly in the hippocampus (at protein level). Expressed in hippocampal neurons, both in cell body and neurites, however its presence is enriched at excitatory synapses and also found in postsynaptic cells.

The protein resides in the cell membrane. It is found in the early endosome membrane. Its subcellular location is the postsynaptic density membrane. The protein localises to the synapse. It localises to the cell projection. The protein resides in the dendrite. It is found in the dendritic spine. May regulate AMPA receptor content at nascent synapses, and have a role in postsynaptic development and maturation. The polypeptide is Synapse differentiation-inducing gene protein 1 (Syndig1) (Rattus norvegicus (Rat)).